The sequence spans 484 residues: Probable glycine dehydrogenase (decarboxylating) subunit 2 (484 aa).

At Lys264 the chain carries N6-(pyridoxal phosphate)lysine.

It belongs to the GcvP family. C-terminal subunit subfamily. The glycine cleavage system is composed of four proteins: P, T, L and H. In this organism, the P 'protein' is a heterodimer of two subunits. It depends on pyridoxal 5'-phosphate as a cofactor.

The catalysed reaction is N(6)-[(R)-lipoyl]-L-lysyl-[glycine-cleavage complex H protein] + glycine + H(+) = N(6)-[(R)-S(8)-aminomethyldihydrolipoyl]-L-lysyl-[glycine-cleavage complex H protein] + CO2. In terms of biological role, the glycine cleavage system catalyzes the degradation of glycine. The P protein binds the alpha-amino group of glycine through its pyridoxal phosphate cofactor; CO(2) is released and the remaining methylamine moiety is then transferred to the lipoamide cofactor of the H protein. In Legionella pneumophila (strain Corby), this protein is Probable glycine dehydrogenase (decarboxylating) subunit 2.